A 307-amino-acid chain; its full sequence is Holliday junction branch migration complex subunit RuvB (307 aa).

A large ATPase domain (RuvB-L) region spans residues 1–167 (MKLQIKPPNN…FGMILNIDYY (167 aa)). ATP-binding positions include isoleucine 5, glycine 48, lysine 51, threonine 52, threonine 53, 114–116 (DDF), arginine 157, tyrosine 167, and arginine 204. Residue threonine 52 coordinates Mg(2+). The interval 168–233 (SNQEIERIVS…DLAALFKSLM (66 aa)) is small ATPAse domain (RuvB-S). Residues 236–307 (KNGLQSIDVQ…RTGRNYLTSC (72 aa)) are head domain (RuvB-H). Residues lysine 289 and arginine 294 each coordinate DNA.

This sequence belongs to the RuvB family. In terms of assembly, homohexamer. Forms an RuvA(8)-RuvB(12)-Holliday junction (HJ) complex. HJ DNA is sandwiched between 2 RuvA tetramers; dsDNA enters through RuvA and exits via RuvB. An RuvB hexamer assembles on each DNA strand where it exits the tetramer. Each RuvB hexamer is contacted by two RuvA subunits (via domain III) on 2 adjacent RuvB subunits; this complex drives branch migration. In the full resolvosome a probable DNA-RuvA(4)-RuvB(12)-RuvC(2) complex forms which resolves the HJ.

The protein resides in the cytoplasm. The enzyme catalyses ATP + H2O = ADP + phosphate + H(+). Its function is as follows. The RuvA-RuvB-RuvC complex processes Holliday junction (HJ) DNA during genetic recombination and DNA repair, while the RuvA-RuvB complex plays an important role in the rescue of blocked DNA replication forks via replication fork reversal (RFR). RuvA specifically binds to HJ cruciform DNA, conferring on it an open structure. The RuvB hexamer acts as an ATP-dependent pump, pulling dsDNA into and through the RuvAB complex. RuvB forms 2 homohexamers on either side of HJ DNA bound by 1 or 2 RuvA tetramers; 4 subunits per hexamer contact DNA at a time. Coordinated motions by a converter formed by DNA-disengaged RuvB subunits stimulates ATP hydrolysis and nucleotide exchange. Immobilization of the converter enables RuvB to convert the ATP-contained energy into a lever motion, pulling 2 nucleotides of DNA out of the RuvA tetramer per ATP hydrolyzed, thus driving DNA branch migration. The RuvB motors rotate together with the DNA substrate, which together with the progressing nucleotide cycle form the mechanistic basis for DNA recombination by continuous HJ branch migration. Branch migration allows RuvC to scan DNA until it finds its consensus sequence, where it cleaves and resolves cruciform DNA. The chain is Holliday junction branch migration complex subunit RuvB from Mycoplasma pneumoniae (strain ATCC 29342 / M129 / Subtype 1) (Mycoplasmoides pneumoniae).